We begin with the raw amino-acid sequence, 384 residues long: 1-deoxy-D-xylulose 5-phosphate reductoisomerase (384 aa).

Residues T10, G11, S12, I13, G36, N38, and N122 each contribute to the NADPH site. K123 lines the 1-deoxy-D-xylulose 5-phosphate pocket. E124 is a binding site for NADPH. D148 lines the Mn(2+) pocket. Residues S149, E150, S174, and H197 each contribute to the 1-deoxy-D-xylulose 5-phosphate site. E150 lines the Mn(2+) pocket. Residue G203 coordinates NADPH. 4 residues coordinate 1-deoxy-D-xylulose 5-phosphate: S210, N215, K216, and E219. E219 provides a ligand contact to Mn(2+).

This sequence belongs to the DXR family. Mg(2+) is required as a cofactor. Requires Mn(2+) as cofactor.

It carries out the reaction 2-C-methyl-D-erythritol 4-phosphate + NADP(+) = 1-deoxy-D-xylulose 5-phosphate + NADPH + H(+). It functions in the pathway isoprenoid biosynthesis; isopentenyl diphosphate biosynthesis via DXP pathway; isopentenyl diphosphate from 1-deoxy-D-xylulose 5-phosphate: step 1/6. Catalyzes the NADPH-dependent rearrangement and reduction of 1-deoxy-D-xylulose-5-phosphate (DXP) to 2-C-methyl-D-erythritol 4-phosphate (MEP). This chain is 1-deoxy-D-xylulose 5-phosphate reductoisomerase, found in Geobacter metallireducens (strain ATCC 53774 / DSM 7210 / GS-15).